The following is a 217-amino-acid chain: Glycosylphosphatidylinositol anchor biosynthesis protein 11 (217 aa).

A run of 6 helical transmembrane segments spans residues threonine 45–isoleucine 61, tryptophan 74–tyrosine 94, valine 111–phenylalanine 131, threonine 138–asparagine 158, tyrosine 169–aspartate 189, and tryptophan 195–serine 215.

It belongs to the PIGF family.

The protein resides in the endoplasmic reticulum membrane. The protein operates within glycolipid biosynthesis; glycosylphosphatidylinositol-anchor biosynthesis. In terms of biological role, acts in the GPI biosynthetic pathway between GlcNAc-PI synthesis and GPI transfer to protein. This Eremothecium gossypii (strain ATCC 10895 / CBS 109.51 / FGSC 9923 / NRRL Y-1056) (Yeast) protein is Glycosylphosphatidylinositol anchor biosynthesis protein 11 (GPI11).